Here is a 100-residue protein sequence, read N- to C-terminus: Large ribosomal subunit protein bL21 (100 aa).

This sequence belongs to the bacterial ribosomal protein bL21 family. As to quaternary structure, part of the 50S ribosomal subunit. Contacts protein L20.

This protein binds to 23S rRNA in the presence of protein L20. The sequence is that of Large ribosomal subunit protein bL21 from Mycoplasma capricolum subsp. capricolum (strain California kid / ATCC 27343 / NCTC 10154).